The primary structure comprises 472 residues: Serine/threonine-protein kinase ULK3 (472 aa).

The Protein kinase domain maps to phenylalanine 14 to valine 270. Residues leucine 20–valine 28 and lysine 44 contribute to the ATP site. Aspartate 137 functions as the Proton acceptor in the catalytic mechanism. Serine 176 is subject to Phosphoserine. The MIT 1 domain occupies leucine 281 to isoleucine 347. A phosphoserine; by autocatalysis mark is found at serine 350 and serine 384. The 69-residue stretch at leucine 376–isoleucine 444 folds into the MIT 2 domain. Serine 464 is subject to Phosphoserine.

Belongs to the protein kinase superfamily. Ser/Thr protein kinase family. APG1/unc-51/ULK1 subfamily. In terms of assembly, interacts (via protein kinase domain) with SUFU. Autophosphorylated. Autophosphorylation is blocked by interaction with SUFU.

Its subcellular location is the cytoplasm. It carries out the reaction L-seryl-[protein] + ATP = O-phospho-L-seryl-[protein] + ADP + H(+). The enzyme catalyses L-threonyl-[protein] + ATP = O-phospho-L-threonyl-[protein] + ADP + H(+). Serine/threonine protein kinase that acts as a regulator of Sonic hedgehog (SHH) signaling and autophagy. Acts as a negative regulator of SHH signaling in the absence of SHH ligand: interacts with SUFU, thereby inactivating the protein kinase activity and preventing phosphorylation of GLI proteins (GLI1, GLI2 and/or GLI3). Positively regulates SHH signaling in the presence of SHH: dissociates from SUFU, autophosphorylates and mediates phosphorylation of GLI2, activating it and promoting its nuclear translocation. Phosphorylates in vitro GLI2, as well as GLI1 and GLI3, although less efficiently. Also acts as a regulator of autophagy: following cellular senescence, able to induce autophagy. This Rattus norvegicus (Rat) protein is Serine/threonine-protein kinase ULK3 (Ulk3).